Reading from the N-terminus, the 59-residue chain is Protein translocase subunit SecE (59 aa).

Residues 33–53 form a helical membrane-spanning segment; the sequence is GAGIALVGLLGFIIFAVMTFV.

Belongs to the SecE/SEC61-gamma family. Component of the Sec protein translocase complex. Heterotrimer consisting of SecY (alpha), SecG (beta) and SecE (gamma) subunits. The heterotrimers can form oligomers, although 1 heterotrimer is thought to be able to translocate proteins. Interacts with the ribosome. May interact with SecDF, and other proteins may be involved.

The protein localises to the cell membrane. Its function is as follows. Essential subunit of the Sec protein translocation channel SecYEG. Clamps together the 2 halves of SecY. May contact the channel plug during translocation. The chain is Protein translocase subunit SecE from Haloarcula marismortui (strain ATCC 43049 / DSM 3752 / JCM 8966 / VKM B-1809) (Halobacterium marismortui).